The chain runs to 137 residues: Basic phospholipase A2 homolog Bsc-K49 (137 aa).

A signal peptide spans 1–16 (MRTLWIVAVLLVGVEG). 7 cysteine pairs are disulfide-bonded: C42-C131, C44-C60, C59-C111, C65-C137, C66-C104, C73-C97, and C91-C102. The important for membrane-damaging activities in eukaryotes and bacteria; heparin-binding stretch occupies residues 121 to 133 (KNYKITMKMFCKK).

It belongs to the phospholipase A2 family. Group II subfamily. K49 sub-subfamily. Homodimer; non-covalently linked. In terms of tissue distribution, expressed by the venom gland.

It is found in the secreted. Snake venom phospholipase A2 that lacks enzymatic activity. Is myotoxic, and displays edema-inducing activities. A model of myotoxic mechanism has been proposed: an apo Lys49-PLA2 is activated by the entrance of a hydrophobic molecule (e.g. fatty acid) at the hydrophobic channel of the protein leading to a reorientation of a monomer. This reorientation causes a transition between 'inactive' to 'active' states, causing alignment of C-terminal and membrane-docking sites (MDoS) side-by-side and putting the membrane-disruption sites (MDiS) in the same plane, exposed to solvent and in a symmetric position for both monomers. The MDoS region stabilizes the toxin on membrane by the interaction of charged residues with phospholipid head groups. Subsequently, the MDiS region destabilizes the membrane with penetration of hydrophobic residues. This insertion causes a disorganization of the membrane, allowing an uncontrolled influx of ions (i.e. calcium and sodium), and eventually triggering irreversible intracellular alterations and cell death. The chain is Basic phospholipase A2 homolog Bsc-K49 from Bothriechis schlegelii (Eyelash palm pitviper).